The primary structure comprises 487 residues: Fatty acid desaturase 2-like protein FADS2B (487 aa).

The segment covering 1 to 11 (MKLEEKLEHNE) has biased composition (basic and acidic residues). Positions 1-20 (MKLEEKLEHNESLVGKSRPC) are disordered. Over 1-175 (MKLEEKLEHN…AMNMFSANLR (175 aa)) the chain is Cytoplasmic. The region spanning 62–139 (LNLYTWQEIQ…LKPLLIGELS (78 aa)) is the Cytochrome b5 heme-binding domain. Histidine 97 and histidine 120 together coordinate heme. A helical membrane pass occupies residues 176–196 (FFFLHLAQILILEISAWLILH). Topologically, residues 197-201 (HFGSS) are lumenal. A helical membrane pass occupies residues 202 to 222 (WLVTILISFLLTVSQAQCSFL). Residues 223–307 (QHDLGHLSMF…IKYIDYEKQH (85 aa)) are Cytoplasmic-facing. Residues 224-228 (HDLGH) carry the Histidine box-1 motif. The Histidine box-2 signature appears at 261–265 (HFQHH). A helical transmembrane segment spans residues 308 to 328 (LYFYMVALPFLMPVYFNLQSM). Topologically, residues 329 to 349 (QVMYLRKYWMDIAWVSSFYIR) are lumenal. A helical membrane pass occupies residues 350-370 (YFITFGPFYGIFGTVLLIYLV). Over 371 to 487 (KFIESPWIAY…ASLWMNAYYE (117 aa)) the chain is Cytoplasmic. The Histidine box-3 motif lies at 426–430 (QIEHH).

The protein belongs to the fatty acid desaturase type 1 family.

The protein localises to the endoplasmic reticulum membrane. The protein operates within lipid metabolism; polyunsaturated fatty acid biosynthesis. This Mus musculus (Mouse) protein is Fatty acid desaturase 2-like protein FADS2B.